The sequence spans 419 residues: Esterase FrsA (419 aa).

The protein belongs to the FrsA family.

It carries out the reaction a carboxylic ester + H2O = an alcohol + a carboxylate + H(+). In terms of biological role, catalyzes the hydrolysis of esters. This Photobacterium profundum (strain SS9) protein is Esterase FrsA.